The primary structure comprises 60 residues: Large ribosomal subunit protein bL32 (60 aa).

This sequence belongs to the bacterial ribosomal protein bL32 family.

The polypeptide is Large ribosomal subunit protein bL32 (Clostridium novyi (strain NT)).